A 198-amino-acid chain; its full sequence is Holliday junction branch migration complex subunit RuvA (198 aa).

Residues 1 to 61 (MTLYKIGEIV…DYIQQTYGFK (61 aa)) are domain I. The segment at 62-139 (TFKERLLFTD…KIIQNKEVKK (78 aa)) is domain II. The segment at 140–144 (FDDIT) is flexible linker. Residues 144–198 (TNIKELKQTLNKLGFKASDIDYAVNNISSTKELDLMVEESINLITTQMHANNQTT) are domain III.

Belongs to the RuvA family. As to quaternary structure, homotetramer. Forms an RuvA(8)-RuvB(12)-Holliday junction (HJ) complex. HJ DNA is sandwiched between 2 RuvA tetramers; dsDNA enters through RuvA and exits via RuvB. An RuvB hexamer assembles on each DNA strand where it exits the tetramer. Each RuvB hexamer is contacted by two RuvA subunits (via domain III) on 2 adjacent RuvB subunits; this complex drives branch migration. In the full resolvosome a probable DNA-RuvA(4)-RuvB(12)-RuvC(2) complex forms which resolves the HJ.

It is found in the cytoplasm. The RuvA-RuvB-RuvC complex processes Holliday junction (HJ) DNA during genetic recombination and DNA repair, while the RuvA-RuvB complex plays an important role in the rescue of blocked DNA replication forks via replication fork reversal (RFR). RuvA specifically binds to HJ cruciform DNA, conferring on it an open structure. The RuvB hexamer acts as an ATP-dependent pump, pulling dsDNA into and through the RuvAB complex. HJ branch migration allows RuvC to scan DNA until it finds its consensus sequence, where it cleaves and resolves the cruciform DNA. This Mycoplasmopsis synoviae (strain 53) (Mycoplasma synoviae) protein is Holliday junction branch migration complex subunit RuvA.